The primary structure comprises 255 residues: F-box/SPRY domain-containing protein 1 (255 aa).

Residues D3 to H51 enclose the F-box domain. Residues T61 to L253 form the B30.2/SPRY domain.

This sequence belongs to the FBXO45/Fsn family. Component of an E3 ubiquitin ligase complex composed of hiw and Fsn.

The protein localises to the synapse. It functions in the pathway protein modification; protein ubiquitination. Required in the presynaptic motoneuron to down-regulate the levels of wnd and restrain synaptic terminal growth at the neuromuscular junction (NMJ). This is F-box/SPRY domain-containing protein 1 from Drosophila persimilis (Fruit fly).